Consider the following 425-residue polypeptide: Protein let-756 (425 aa).

Disordered regions lie at residues 277 to 298 and 314 to 425; these read LEEKKRRREKKKRRREDRLRKE and EEEL…QRYP. The span at 281–291 shows a compositional bias: basic residues; the sequence is KRRREKKKRRR. The span at 329-340 shows a compositional bias: polar residues; the sequence is ASTQTRYNRPQN. A compositionally biased stretch (basic residues) spans 378-389; sequence HNSHHHHHHHPR. A compositionally biased stretch (polar residues) spans 395 to 425; sequence DPQQRHQSQQHYLAQTVSNPNRQNVNYQRYP.

This sequence belongs to the heparin-binding growth factors family. In terms of assembly, interacts with pal-1. In terms of tissue distribution, expressed in pharynx, CAN neuron and body wall muscles.

It localises to the nucleus. The protein localises to the membrane. Required for larval development. Probably by binding receptor egl-15, negatively regulates membrane protrusion from body wall muscles during larval development. This is Protein let-756 (let-756) from Caenorhabditis elegans.